Reading from the N-terminus, the 245-residue chain is Octanoyltransferase (245 aa).

One can recognise a BPL/LPL catalytic domain in the interval 54-238; sequence GEATELVWLL…AFENIFGETR (185 aa). Residues 92–99, 167–169, and 180–182 contribute to the substrate site; these read RGGQLTYH, AIG, and GIA. Cysteine 198 acts as the Acyl-thioester intermediate in catalysis.

Belongs to the LipB family.

Its subcellular location is the cytoplasm. The enzyme catalyses octanoyl-[ACP] + L-lysyl-[protein] = N(6)-octanoyl-L-lysyl-[protein] + holo-[ACP] + H(+). The protein operates within protein modification; protein lipoylation via endogenous pathway; protein N(6)-(lipoyl)lysine from octanoyl-[acyl-carrier-protein]: step 1/2. Catalyzes the transfer of endogenously produced octanoic acid from octanoyl-acyl-carrier-protein onto the lipoyl domains of lipoate-dependent enzymes. Lipoyl-ACP can also act as a substrate although octanoyl-ACP is likely to be the physiological substrate. In Rhodopseudomonas palustris (strain TIE-1), this protein is Octanoyltransferase.